Here is a 570-residue protein sequence, read N- to C-terminus: Urease subunit alpha 1 (570 aa).

The Urease domain occupies 131–570; it reads GGIDTHVHFI…VPMAQRYFLF (440 aa). Positions 136, 138, and 219 each coordinate Ni(2+). An N6-carboxylysine modification is found at lysine 219. Position 221 (histidine 221) interacts with substrate. Ni(2+)-binding residues include histidine 248 and histidine 274. The Proton donor role is filled by histidine 322. Aspartate 362 lines the Ni(2+) pocket.

It belongs to the metallo-dependent hydrolases superfamily. Urease alpha subunit family. As to quaternary structure, heterotrimer of UreA (gamma), UreB (beta) and UreC (alpha) subunits. Three heterotrimers associate to form the active enzyme. It depends on Ni cation as a cofactor. Post-translationally, carboxylation allows a single lysine to coordinate two nickel ions.

The protein localises to the cytoplasm. The catalysed reaction is urea + 2 H2O + H(+) = hydrogencarbonate + 2 NH4(+). It functions in the pathway nitrogen metabolism; urea degradation; CO(2) and NH(3) from urea (urease route): step 1/1. Its function is as follows. May protect brucellae during their passage through the stomach. The major route of infection in human brucellosis is oral. The protein is Urease subunit alpha 1 of Brucella abortus (strain 2308).